The sequence spans 429 residues: Histidine--tRNA ligase (429 aa).

Belongs to the class-II aminoacyl-tRNA synthetase family. As to quaternary structure, homodimer.

The protein localises to the cytoplasm. The catalysed reaction is tRNA(His) + L-histidine + ATP = L-histidyl-tRNA(His) + AMP + diphosphate + H(+). This is Histidine--tRNA ligase from Acidovorax ebreus (strain TPSY) (Diaphorobacter sp. (strain TPSY)).